Reading from the N-terminus, the 98-residue chain is Putative septation protein SpoVG (98 aa).

The protein belongs to the SpoVG family.

Essential for sporulation. Interferes with or is a negative regulator of the pathway leading to asymmetric septation. This is Putative septation protein SpoVG from Bacillus pumilus (strain SAFR-032).